The following is an 83-amino-acid chain: Protein CASPARIAN STRIP INTEGRITY FACTOR 1 (83 aa).

A signal peptide spans 1 to 22 (MGMSPLTVKKLGFIFMIVSASA). The disordered stretch occupies residues 59 to 83 (MNTKDYGNNSPSPRLERPPFKLIPN). A Sulfotyrosine modification is found at tyrosine 64. Residues proline 69 and proline 71 each carry the hydroxyproline modification.

As to quaternary structure, interacts with the specific receptor kinases GSO1 and GSO2. In terms of tissue distribution, expressed exclusively in the root stele.

Functionally, peptide hormone required for contiguous Casparian strip diffusion barrier formation in roots via the regulation of CASPs protein expression and distribution in a GSO1-GSO2 signaling pathway. The Casparian strip is required for ion homeostasis (e.g. iron and potassium ions). The sequence is that of Protein CASPARIAN STRIP INTEGRITY FACTOR 1 from Arabidopsis thaliana (Mouse-ear cress).